A 109-amino-acid chain; its full sequence is Hainantoxin-XVIII-5 (109 aa).

The signal sequence occupies residues 1–18 (MKLSIIIIATSLVIAVVA). Residues 19–46 (FPSKDSKAIENDKTEQRMEIVVQETARA) constitute a propeptide that is removed on maturation. 4 disulfides stabilise this stretch: cysteine 47–cysteine 62, cysteine 55–cysteine 68, cysteine 59–cysteine 108, and cysteine 61–cysteine 81.

The protein belongs to the neurotoxin 25 family. F7 subfamily. As to expression, expressed by the venom gland.

Its subcellular location is the secreted. Its function is as follows. Putative ion channel inhibitor. This is Hainantoxin-XVIII-5 from Cyriopagopus hainanus (Chinese bird spider).